A 143-amino-acid chain; its full sequence is Peptide methionine sulfoxide reductase MsrB (143 aa).

Positions 5–127 (NEELKKKLTP…NSAALRFIPK (123 aa)) constitute a MsrB domain. The active-site Nucleophile is the Cys116.

This sequence belongs to the MsrB Met sulfoxide reductase family.

It catalyses the reaction L-methionyl-[protein] + [thioredoxin]-disulfide + H2O = L-methionyl-(R)-S-oxide-[protein] + [thioredoxin]-dithiol. In Halalkalibacterium halodurans (strain ATCC BAA-125 / DSM 18197 / FERM 7344 / JCM 9153 / C-125) (Bacillus halodurans), this protein is Peptide methionine sulfoxide reductase MsrB.